The chain runs to 265 residues: Tryptophan synthase alpha chain (265 aa).

Residues glutamate 45 and aspartate 56 each act as proton acceptor in the active site.

The protein belongs to the TrpA family. As to quaternary structure, tetramer of two alpha and two beta chains.

The catalysed reaction is (1S,2R)-1-C-(indol-3-yl)glycerol 3-phosphate + L-serine = D-glyceraldehyde 3-phosphate + L-tryptophan + H2O. The protein operates within amino-acid biosynthesis; L-tryptophan biosynthesis; L-tryptophan from chorismate: step 5/5. In terms of biological role, the alpha subunit is responsible for the aldol cleavage of indoleglycerol phosphate to indole and glyceraldehyde 3-phosphate. In Halalkalibacterium halodurans (strain ATCC BAA-125 / DSM 18197 / FERM 7344 / JCM 9153 / C-125) (Bacillus halodurans), this protein is Tryptophan synthase alpha chain.